The chain runs to 519 residues: NADH-quinone oxidoreductase subunit N (519 aa).

The next 14 membrane-spanning stretches (helical) occupy residues 22–42, 53–73, 87–107, 141–161, 163–183, 198–218, 242–262, 287–307, 310–330, 336–356, 363–383, 406–426, 442–461, and 483–503; these read LLPMLIVFGVACAGVLVEAFV, VLALGGLVAALIAVVSNTGLP, PTLFIQGTILALSIGALLLIA, TEVFPLAMFAVGGMMLFPAAN, LITAFVALEVLSLPLYLLAGM, YFLLGAFSSAFFVYGLALVYG, IIVGLALIGISLLFKLSGVPF, VAAFGALLRVFFVAFGGLAWD, PVIWGVAIATMVVGAILGITQ, LLAYSSIAHAGFVLTAFAATT, VLFYLVAYGFMTIGAFAIVIL, LVAGIFALFLLAMAGLPPTSG, AGPLVIVGVLASAVTAYYYL, and GALASAAIALGVIVTVVLGIV.

This sequence belongs to the complex I subunit 2 family. NDH-1 is composed of 14 different subunits. Subunits NuoA, H, J, K, L, M, N constitute the membrane sector of the complex.

It localises to the cell membrane. The enzyme catalyses a quinone + NADH + 5 H(+)(in) = a quinol + NAD(+) + 4 H(+)(out). Its function is as follows. NDH-1 shuttles electrons from NADH, via FMN and iron-sulfur (Fe-S) centers, to quinones in the respiratory chain. The immediate electron acceptor for the enzyme in this species is believed to be a menaquinone. Couples the redox reaction to proton translocation (for every two electrons transferred, four hydrogen ions are translocated across the cytoplasmic membrane), and thus conserves the redox energy in a proton gradient. In Acidothermus cellulolyticus (strain ATCC 43068 / DSM 8971 / 11B), this protein is NADH-quinone oxidoreductase subunit N.